The following is a 187-amino-acid chain: UPF0301 protein VF_0434 (187 aa).

It belongs to the UPF0301 (AlgH) family.

The protein is UPF0301 protein VF_0434 of Aliivibrio fischeri (strain ATCC 700601 / ES114) (Vibrio fischeri).